The sequence spans 433 residues: tRNA(Ile)-lysidine synthase (433 aa).

37-42 is a binding site for ATP; that stretch reads SGGKDS.

The protein belongs to the tRNA(Ile)-lysidine synthase family.

It is found in the cytoplasm. It carries out the reaction cytidine(34) in tRNA(Ile2) + L-lysine + ATP = lysidine(34) in tRNA(Ile2) + AMP + diphosphate + H(+). Functionally, ligates lysine onto the cytidine present at position 34 of the AUA codon-specific tRNA(Ile) that contains the anticodon CAU, in an ATP-dependent manner. Cytidine is converted to lysidine, thus changing the amino acid specificity of the tRNA from methionine to isoleucine. This is tRNA(Ile)-lysidine synthase from Leptospira interrogans serogroup Icterohaemorrhagiae serovar Lai (strain 56601).